We begin with the raw amino-acid sequence, 200 residues long: Glycerol-3-phosphate acyltransferase (200 aa).

The next 5 membrane-spanning stretches (helical) occupy residues 2 to 22, 51 to 71, 84 to 104, 114 to 134, and 159 to 179; these read FNIPAVAVSYLIGSLSFAVIV, KAAVLTLLGDAAKGLVAVLLA, AIAAVALAALVGHMWPVFFGF, LGVLLALSPATALVCALIWLV, and FFMPHLSWIWATLLIALLVLF.

Belongs to the PlsY family. Probably interacts with PlsX.

It is found in the cell inner membrane. It carries out the reaction an acyl phosphate + sn-glycerol 3-phosphate = a 1-acyl-sn-glycero-3-phosphate + phosphate. It functions in the pathway lipid metabolism; phospholipid metabolism. In terms of biological role, catalyzes the transfer of an acyl group from acyl-phosphate (acyl-PO(4)) to glycerol-3-phosphate (G3P) to form lysophosphatidic acid (LPA). This enzyme utilizes acyl-phosphate as fatty acyl donor, but not acyl-CoA or acyl-ACP. This Neisseria meningitidis serogroup C / serotype 2a (strain ATCC 700532 / DSM 15464 / FAM18) protein is Glycerol-3-phosphate acyltransferase.